Here is a 263-residue protein sequence, read N- to C-terminus: Alpha-tubulin N-acetyltransferase 2 (263 aa).

Positions 1–181 (MEIAFDLSSI…NKYAVFPNFF (181 aa)) constitute an N-acetyltransferase domain. Position 115 to 128 (115 to 128 (FFIVPTEQRSGNGF)) interacts with acetyl-CoA. Disordered regions lie at residues 191–224 (TPRQ…RPRH) and 236–263 (FPRG…EPIW). Positions 200-212 (RASSAVSSHTTSR) are enriched in low complexity. Residues 253–263 (LTRDQRHEPIW) are compositionally biased toward basic and acidic residues.

This sequence belongs to the acetyltransferase ATAT1 family.

The catalysed reaction is L-lysyl-[alpha-tubulin] + acetyl-CoA = N(6)-acetyl-L-lysyl-[alpha-tubulin] + CoA + H(+). Specifically acetylates 'Lys-40' in alpha-tubulin/mec-12 on the lumenal side of microtubules. Promotes microtubule destabilization and accelerates microtubule dynamics; this activity may be independent of acetylation activity. Acetylates alpha-tubulin with a slow enzymatic rate, due to a catalytic site that is not optimized for acetyl transfer. Enters the microtubule through each end and diffuses quickly throughout the lumen of microtubules. Acetylates only long/old microtubules because of its slow acetylation rate since it does not have time to act on dynamically unstable microtubules before the enzyme is released. Required for the maintenance of touch receptor neurons and possibly other type of neurons involved in locomotion. This Caenorhabditis briggsae protein is Alpha-tubulin N-acetyltransferase 2 (atat-2).